The primary structure comprises 154 residues: Crossover junction endodeoxyribonuclease RuvC (154 aa).

Catalysis depends on residues Asp-7, Glu-67, and Asp-139. The Mg(2+) site is built by Asp-7, Glu-67, and Asp-139.

The protein belongs to the RuvC family. As to quaternary structure, homodimer which binds Holliday junction (HJ) DNA. The HJ becomes 2-fold symmetrical on binding to RuvC with unstacked arms; it has a different conformation from HJ DNA in complex with RuvA. In the full resolvosome a probable DNA-RuvA(4)-RuvB(12)-RuvC(2) complex forms which resolves the HJ. The cofactor is Mg(2+).

The protein localises to the cytoplasm. It carries out the reaction Endonucleolytic cleavage at a junction such as a reciprocal single-stranded crossover between two homologous DNA duplexes (Holliday junction).. Its function is as follows. The RuvA-RuvB-RuvC complex processes Holliday junction (HJ) DNA during genetic recombination and DNA repair. Endonuclease that resolves HJ intermediates. Cleaves cruciform DNA by making single-stranded nicks across the HJ at symmetrical positions within the homologous arms, yielding a 5'-phosphate and a 3'-hydroxyl group; requires a central core of homology in the junction. The consensus cleavage sequence is 5'-(A/T)TT(C/G)-3'. Cleavage occurs on the 3'-side of the TT dinucleotide at the point of strand exchange. HJ branch migration catalyzed by RuvA-RuvB allows RuvC to scan DNA until it finds its consensus sequence, where it cleaves and resolves the cruciform DNA. This is Crossover junction endodeoxyribonuclease RuvC from Prochlorococcus marinus (strain NATL1A).